We begin with the raw amino-acid sequence, 430 residues long: Serine--tRNA ligase (430 aa).

Thr231–Glu233 lines the L-serine pocket. Residue Arg262–Glu264 coordinates ATP. Glu285 contributes to the L-serine binding site. Glu349–Ser352 serves as a coordination point for ATP. Ser385 serves as a coordination point for L-serine.

The protein belongs to the class-II aminoacyl-tRNA synthetase family. Type-1 seryl-tRNA synthetase subfamily. As to quaternary structure, homodimer. The tRNA molecule binds across the dimer.

The protein resides in the cytoplasm. The enzyme catalyses tRNA(Ser) + L-serine + ATP = L-seryl-tRNA(Ser) + AMP + diphosphate + H(+). The catalysed reaction is tRNA(Sec) + L-serine + ATP = L-seryl-tRNA(Sec) + AMP + diphosphate + H(+). It functions in the pathway aminoacyl-tRNA biosynthesis; selenocysteinyl-tRNA(Sec) biosynthesis; L-seryl-tRNA(Sec) from L-serine and tRNA(Sec): step 1/1. Its function is as follows. Catalyzes the attachment of serine to tRNA(Ser). Is also able to aminoacylate tRNA(Sec) with serine, to form the misacylated tRNA L-seryl-tRNA(Sec), which will be further converted into selenocysteinyl-tRNA(Sec). The chain is Serine--tRNA ligase from Ruegeria pomeroyi (strain ATCC 700808 / DSM 15171 / DSS-3) (Silicibacter pomeroyi).